Reading from the N-terminus, the 718-residue chain is DNA ligase (718 aa).

Residues 34 to 38 (DAEYD), 83 to 84 (SL), and E115 each bind NAD(+). The active-site N6-AMP-lysine intermediate is the K117. NAD(+)-binding residues include R138, E186, K302, and K326. Residues C420, C423, C438, and C444 each coordinate Zn(2+). The region spanning 604 to 694 (PKGDALAGKT…DRSAPAASNN (91 aa)) is the BRCT domain.

Belongs to the NAD-dependent DNA ligase family. LigA subfamily. Mg(2+) serves as cofactor. Requires Mn(2+) as cofactor.

It catalyses the reaction NAD(+) + (deoxyribonucleotide)n-3'-hydroxyl + 5'-phospho-(deoxyribonucleotide)m = (deoxyribonucleotide)n+m + AMP + beta-nicotinamide D-nucleotide.. Functionally, DNA ligase that catalyzes the formation of phosphodiester linkages between 5'-phosphoryl and 3'-hydroxyl groups in double-stranded DNA using NAD as a coenzyme and as the energy source for the reaction. It is essential for DNA replication and repair of damaged DNA. The sequence is that of DNA ligase from Roseiflexus castenholzii (strain DSM 13941 / HLO8).